The following is a 322-amino-acid chain: Phosphatidylserine decarboxylase proenzyme (322 aa).

Active-site charge relay system; for autoendoproteolytic cleavage activity residues include aspartate 90, histidine 147, and serine 254. The Schiff-base intermediate with substrate; via pyruvic acid; for decarboxylase activity role is filled by serine 254. A Pyruvic acid (Ser); by autocatalysis modification is found at serine 254. The disordered stretch occupies residues proline 297 to threonine 322. Positions glutamate 303–threonine 322 are enriched in basic and acidic residues.

This sequence belongs to the phosphatidylserine decarboxylase family. PSD-B subfamily. Prokaryotic type I sub-subfamily. In terms of assembly, heterodimer of a large membrane-associated beta subunit and a small pyruvoyl-containing alpha subunit. It depends on pyruvate as a cofactor. In terms of processing, is synthesized initially as an inactive proenzyme. Formation of the active enzyme involves a self-maturation process in which the active site pyruvoyl group is generated from an internal serine residue via an autocatalytic post-translational modification. Two non-identical subunits are generated from the proenzyme in this reaction, and the pyruvate is formed at the N-terminus of the alpha chain, which is derived from the carboxyl end of the proenzyme. The autoendoproteolytic cleavage occurs by a canonical serine protease mechanism, in which the side chain hydroxyl group of the serine supplies its oxygen atom to form the C-terminus of the beta chain, while the remainder of the serine residue undergoes an oxidative deamination to produce ammonia and the pyruvoyl prosthetic group on the alpha chain. During this reaction, the Ser that is part of the protease active site of the proenzyme becomes the pyruvoyl prosthetic group, which constitutes an essential element of the active site of the mature decarboxylase.

The protein localises to the cell membrane. The enzyme catalyses a 1,2-diacyl-sn-glycero-3-phospho-L-serine + H(+) = a 1,2-diacyl-sn-glycero-3-phosphoethanolamine + CO2. The protein operates within phospholipid metabolism; phosphatidylethanolamine biosynthesis; phosphatidylethanolamine from CDP-diacylglycerol: step 2/2. Its function is as follows. Catalyzes the formation of phosphatidylethanolamine (PtdEtn) from phosphatidylserine (PtdSer). This chain is Phosphatidylserine decarboxylase proenzyme, found in Salmonella typhi.